A 599-amino-acid chain; its full sequence is Elongation factor 4 (599 aa).

In terms of domain architecture, tr-type G spans 2 to 184 (KHIRNFSIIA…RLVRDIPPPE (183 aa)). GTP-binding positions include 14-19 (DHGKST) and 131-134 (NKID).

Belongs to the TRAFAC class translation factor GTPase superfamily. Classic translation factor GTPase family. LepA subfamily.

The protein localises to the cell inner membrane. It catalyses the reaction GTP + H2O = GDP + phosphate + H(+). Functionally, required for accurate and efficient protein synthesis under certain stress conditions. May act as a fidelity factor of the translation reaction, by catalyzing a one-codon backward translocation of tRNAs on improperly translocated ribosomes. Back-translocation proceeds from a post-translocation (POST) complex to a pre-translocation (PRE) complex, thus giving elongation factor G a second chance to translocate the tRNAs correctly. Binds to ribosomes in a GTP-dependent manner. This Pectobacterium carotovorum subsp. carotovorum (strain PC1) protein is Elongation factor 4.